A 195-amino-acid polypeptide reads, in one-letter code: 3-isopropylmalate dehydratase small subunit (195 aa).

It belongs to the LeuD family. LeuD type 1 subfamily. As to quaternary structure, heterodimer of LeuC and LeuD.

It catalyses the reaction (2R,3S)-3-isopropylmalate = (2S)-2-isopropylmalate. Its pathway is amino-acid biosynthesis; L-leucine biosynthesis; L-leucine from 3-methyl-2-oxobutanoate: step 2/4. Its function is as follows. Catalyzes the isomerization between 2-isopropylmalate and 3-isopropylmalate, via the formation of 2-isopropylmaleate. In Salinispora arenicola (strain CNS-205), this protein is 3-isopropylmalate dehydratase small subunit.